The chain runs to 295 residues: Ribosomal RNA small subunit methyltransferase A (295 aa).

Residues N29, L31, G56, E77, D102, and N128 each contribute to the S-adenosyl-L-methionine site.

The protein belongs to the class I-like SAM-binding methyltransferase superfamily. rRNA adenine N(6)-methyltransferase family. RsmA subfamily.

The protein localises to the cytoplasm. The catalysed reaction is adenosine(1518)/adenosine(1519) in 16S rRNA + 4 S-adenosyl-L-methionine = N(6)-dimethyladenosine(1518)/N(6)-dimethyladenosine(1519) in 16S rRNA + 4 S-adenosyl-L-homocysteine + 4 H(+). Its function is as follows. Specifically dimethylates two adjacent adenosines (A1518 and A1519) in the loop of a conserved hairpin near the 3'-end of 16S rRNA in the 30S particle. May play a critical role in biogenesis of 30S subunits. The chain is Ribosomal RNA small subunit methyltransferase A from Listeria monocytogenes serotype 4a (strain HCC23).